The primary structure comprises 747 residues: Protein Niban 2 (747 aa).

Gly-2 is lipidated: N-myristoyl glycine. The 125-residue stretch at 68-192 (RIIFSGNLFQ…WQAVLQDCVR (125 aa)) folds into the PH domain. Residues Ser-568 and Ser-574 each carry the phosphoserine modification. A disordered region spans residues 589–747 (WGEQYGDGGD…EDSAGVQTEF (159 aa)). The segment covering 593–602 (YGDGGDGSDS) has biased composition (gly residues). Phosphoserine is present on residues Ser-605, Ser-626, Ser-641, Ser-645, Ser-648, Ser-667, Ser-672, Ser-683, Ser-693, and Ser-697. Over residues 708–722 (VDLEPPKPSDQETGE) the composition is skewed to basic and acidic residues. Positions 734–747 (HTTTEDSAGVQTEF) are enriched in polar residues.

It belongs to the Niban family. In terms of processing, as apoptosis proceeds, degraded via an proteasome-independent pathway, probably by caspases.

It is found in the cytoplasm. The protein localises to the cytosol. It localises to the cell junction. The protein resides in the adherens junction. Its subcellular location is the membrane. In terms of biological role, may play a role in apoptosis suppression. The chain is Protein Niban 2 from Rattus norvegicus (Rat).